Reading from the N-terminus, the 777-residue chain is Hepatocyte growth factor-regulated tyrosine kinase substrate (777 aa).

The 129-residue stretch at 15–143 folds into the VHS domain; that stretch reads ATSQLLLETD…IMKVEGHVFP (129 aa). The segment at 160 to 220 adopts an FYVE-type zinc-finger fold; the sequence is WVDAEECHRC…VCEPCFEQLN (61 aa). Zn(2+)-binding residues include C166, C169, C182, C185, C190, and C193. K207 carries the N6-acetyllysine modification. Zn(2+)-binding residues include C212 and C215. Residues 223–319 form a disordered region; it reads AEGKAASTTE…SPVNSSAPLA (97 aa). Residues 225–541 form an interaction with SNX1 region; it reads GKAASTTELP…QRLQEQEKER (317 aa). A UIM domain is found at 258–277; that stretch reads QEEEELQLALALSQSEAEEK. Residues 292–311 are compositionally biased toward low complexity; sequence AEPTPVASSAPPASSLYSSP. Phosphotyrosine occurs at positions 308, 329, and 334. The disordered stretch occupies residues 338–370; that stretch reads KQEEARKSPTPSAPVPLTEPTAQPGEGHAIPAN. An interaction with SNAP25 and TRAK2 region spans residues 443–541; sequence SINTMHPQLL…QRLQEQEKER (99 aa). Residues 452–570 are interaction with STAM; it reads LELLNQLDER…FSLPYAQLQA (119 aa). The interaction with NF2 stretch occupies residues 478–777; that stretch reads ARGALSALRE…GSEAQLISFD (300 aa). K549 carries the N6-succinyllysine modification. Over residues 645–658 the composition is skewed to low complexity; the sequence is AAAQGPAGPTTSPA. Disordered stretches follow at residues 645–698 and 712–777; these read AAAQ…YMGS and NLMP…ISFD. 2 stretches are compositionally biased toward polar residues: residues 659-698 and 730-739; these read YSSY…YMGS and PYISGQQPVY. Over residues 753 to 777 the composition is skewed to low complexity; that stretch reads PPVAQQPPAQGPPAQGSEAQLISFD.

In terms of assembly, component of the ESCRT-0 complex composed of STAM or STAM2 and HGS. Part of a complex at least composed of HSG, STAM2 (or probably STAM) and EPS15. Interacts with STAM. Interacts with STAM2. Interacts with EPS15; the interaction is direct, calcium-dependent and inhibited by SNAP25. Identified in a complex with STAM and LITAF. Found in a complex with STAM and E3 ligase ITCH and DTX3L. Interacts with E3 ligase DTX3L; the interaction brings together STAM and HSG, promotes their recruitment to early endosomes and decreases STAM and HGS ubiquitination by ITCH. Interacts with NF2; the interaction is direct. Interacts with ubiquitin; the interaction is direct. Interacts with VPS37C. Interacts with SMAD1, SMAD2 and SMAD3. Interacts with TSG101; the interaction mediates the association with the ESCRT-I complex. Interacts with SNAP25; the interaction is direct and decreases with addition of increasing concentrations of free calcium. Interacts with SNX1; the interaction is direct. Component of a 550 kDa membrane complex at least composed of HGS and SNX1 but excluding EGFR. Interacts with TRAK1. Interacts with TRAK2. Component of the CART complex, at least composed of ACTN4, HGS/HRS, MYO5B and TRIM3. Interacts (via UIM domain) with UBQLN1 (via ubiquitin-like domain). Interacts with ARRDC3. Identified in a complex containing at least ARRDC4, AVPR2 and HGS. Interacts with LAPTM4B; promotes HGS ubiquitination. Post-translationally, phosphorylated on Tyr-334. A minor site of phosphorylation on Tyr-329 is detected. Phosphorylation occurs in response to EGF, IL-2, GM-CSF and HGF. In terms of processing, ubiquitinated by ITCH.

The protein resides in the cytoplasm. Its subcellular location is the early endosome membrane. The protein localises to the endosome. It is found in the multivesicular body membrane. Its function is as follows. Involved in intracellular signal transduction mediated by cytokines and growth factors. When associated with STAM it suppresses DNA signaling upon stimulation by IL-2 and GM-CSF. Could be a direct effector of PI3-kinase in vesicular pathway via early endosomes and may regulate trafficking to early and late endosomes by recruiting clathrin. May concentrate ubiquitinated receptors within clathrin-coated regions. Involved in down-regulation of receptor tyrosine kinase via multivesicular body (MVBs) when complexed with STAM (ESCRT-0 complex). The ESCRT-0 complex binds ubiquitin and acts as a sorting machinery that recognizes ubiquitinated receptors and transfers them to further sequential lysosomal sorting/trafficking processes. May contribute to the efficient recruitment of SMADs to the activin receptor complex. Involved in receptor recycling via its association with the CART complex, a multiprotein complex required for efficient transferrin receptor recycling but not for EGFR degradation. In Bos taurus (Bovine), this protein is Hepatocyte growth factor-regulated tyrosine kinase substrate (HGS).